The following is a 663-amino-acid chain: Translation factor GUF1, mitochondrial (663 aa).

Residues 1 to 37 (MRGCLQSVRLLTTALGQSPRRPLPFAFRLPPNASRLF) constitute a mitochondrion transit peptide. Residues 65-245 (ERYRNFCIVA…TIVEQIPAPI (181 aa)) form the tr-type G domain. GTP is bound by residues 74-81 (AHVDHGKS), 138-142 (DTPGH), and 192-195 (NKVD).

The protein belongs to the TRAFAC class translation factor GTPase superfamily. Classic translation factor GTPase family. LepA subfamily.

The protein localises to the mitochondrion inner membrane. It carries out the reaction GTP + H2O = GDP + phosphate + H(+). Its function is as follows. Promotes mitochondrial protein synthesis. May act as a fidelity factor of the translation reaction, by catalyzing a one-codon backward translocation of tRNAs on improperly translocated ribosomes. Binds to mitochondrial ribosomes in a GTP-dependent manner. The sequence is that of Translation factor GUF1, mitochondrial from Uncinocarpus reesii (strain UAMH 1704).